A 132-amino-acid polypeptide reads, in one-letter code: Small ribosomal subunit protein uS8 (132 aa).

This sequence belongs to the universal ribosomal protein uS8 family. Part of the 30S ribosomal subunit. Contacts proteins S5 and S12.

One of the primary rRNA binding proteins, it binds directly to 16S rRNA central domain where it helps coordinate assembly of the platform of the 30S subunit. The polypeptide is Small ribosomal subunit protein uS8 (Mycoplasmopsis pulmonis (strain UAB CTIP) (Mycoplasma pulmonis)).